The sequence spans 115 residues: Aspartate 1-decarboxylase (115 aa).

The active-site Schiff-base intermediate with substrate; via pyruvic acid is Ser25. The residue at position 25 (Ser25) is a Pyruvic acid (Ser). Thr57 lines the substrate pocket. Tyr58 acts as the Proton donor in catalysis. Substrate is bound at residue 73-75 (GAA).

Belongs to the PanD family. As to quaternary structure, heterooctamer of four alpha and four beta subunits. Requires pyruvate as cofactor. In terms of processing, is synthesized initially as an inactive proenzyme, which is activated by self-cleavage at a specific serine bond to produce a beta-subunit with a hydroxyl group at its C-terminus and an alpha-subunit with a pyruvoyl group at its N-terminus.

The protein resides in the cytoplasm. It carries out the reaction L-aspartate + H(+) = beta-alanine + CO2. It functions in the pathway cofactor biosynthesis; (R)-pantothenate biosynthesis; beta-alanine from L-aspartate: step 1/1. Functionally, catalyzes the pyruvoyl-dependent decarboxylation of aspartate to produce beta-alanine. The sequence is that of Aspartate 1-decarboxylase from Kosmotoga olearia (strain ATCC BAA-1733 / DSM 21960 / TBF 19.5.1).